A 401-amino-acid chain; its full sequence is Riboflavin biosynthesis protein RibBA (401 aa).

The segment at methionine 1–lysine 203 is DHBP synthase. D-ribulose 5-phosphate is bound by residues arginine 30 to glutamate 31, aspartate 35, arginine 142 to threonine 146, and glutamate 166. Mg(2+) is bound at residue glutamate 31. Histidine 145 contacts Mg(2+). The tract at residues histidine 204–phenylalanine 401 is GTP cyclohydrolase II. Arginine 254–glutamate 258 contributes to the GTP binding site. Zn(2+)-binding residues include cysteine 259, cysteine 270, and cysteine 272. Residues glutamine 275, glutamate 297–arginine 299, and threonine 319 contribute to the GTP site. The active-site Proton acceptor; for GTP cyclohydrolase activity is the aspartate 331. Arginine 333 serves as the catalytic Nucleophile; for GTP cyclohydrolase activity. Positions 354 and 359 each coordinate GTP.

It in the N-terminal section; belongs to the DHBP synthase family. In the C-terminal section; belongs to the GTP cyclohydrolase II family. Mg(2+) is required as a cofactor. Mn(2+) serves as cofactor. Requires Zn(2+) as cofactor.

It carries out the reaction D-ribulose 5-phosphate = (2S)-2-hydroxy-3-oxobutyl phosphate + formate + H(+). The enzyme catalyses GTP + 4 H2O = 2,5-diamino-6-hydroxy-4-(5-phosphoribosylamino)-pyrimidine + formate + 2 phosphate + 3 H(+). It functions in the pathway cofactor biosynthesis; riboflavin biosynthesis; 2-hydroxy-3-oxobutyl phosphate from D-ribulose 5-phosphate: step 1/1. Its pathway is cofactor biosynthesis; riboflavin biosynthesis; 5-amino-6-(D-ribitylamino)uracil from GTP: step 1/4. In terms of biological role, catalyzes the conversion of D-ribulose 5-phosphate to formate and 3,4-dihydroxy-2-butanone 4-phosphate. Its function is as follows. Catalyzes the conversion of GTP to 2,5-diamino-6-ribosylamino-4(3H)-pyrimidinone 5'-phosphate (DARP), formate and pyrophosphate. This chain is Riboflavin biosynthesis protein RibBA, found in Actinobacillus pleuropneumoniae serotype 7 (strain AP76).